We begin with the raw amino-acid sequence, 100 residues long: Putative septation protein SpoVG (100 aa).

The protein belongs to the SpoVG family.

Could be involved in septation. This Clostridium novyi (strain NT) protein is Putative septation protein SpoVG.